Consider the following 555-residue polypeptide: Bifunctional epoxide hydrolase 2 (555 aa).

The interval 1–224 (MTLRAAVFDL…KVTGIQLLNT (224 aa)) is phosphatase. Mg(2+) is bound by residues Asp-9 and Asp-11. Lys-43 is subject to N6-acetyllysine. Lys-55 is subject to N6-succinyllysine. Phosphate is bound at residue 123 to 124 (TN). Asp-185 lines the Mg(2+) pocket. N6-acetyllysine is present on residues Lys-191 and Lys-215. The tract at residues 235–555 (SDMSHGYVTV…ARNPPVVSKM (321 aa)) is epoxide hydrolase. The 273-residue stretch at 259-531 (PAVCLCHGFP…CGHWTQMDKP (273 aa)) folds into the AB hydrolase-1 domain. Asp-335 acts as the Nucleophile in catalysis. Phosphoserine is present on Ser-370. Tyr-383 contributes to the substrate binding site. N6-succinyllysine occurs at positions 421 and 455. Catalysis depends on Tyr-466, which acts as the Proton donor. Cys-522 carries S-(15-deoxy-Delta12,14-prostaglandin J2-9-yl)cysteine lipidation. Residue His-524 is the Proton acceptor of the active site. Residues 553 to 555 (SKM) carry the Microbody targeting signal motif. Residue Lys-554 is modified to N6-succinyllysine.

It belongs to the AB hydrolase superfamily. Epoxide hydrolase family. As to quaternary structure, homodimer. It depends on Mg(2+) as a cofactor. In terms of processing, the N-terminus is blocked. The covalent modification of cysteine by 15-deoxy-Delta12,14-prostaglandin-J2 is autocatalytic and reversible. It may occur as an alternative to other cysteine modifications, such as S-nitrosylation and S-palmitoylation.

It localises to the cytoplasm. The protein resides in the peroxisome. The catalysed reaction is an epoxide + H2O = an ethanediol. It carries out the reaction (9S,10S)-10-hydroxy-9-(phosphooxy)octadecanoate + H2O = (9S,10S)-9,10-dihydroxyoctadecanoate + phosphate. It catalyses the reaction 12-phosphooxy-(9Z)-octadecenoate + H2O = 12-hydroxy-(9Z)-octadecenoate + phosphate. The enzyme catalyses 12-phosphooxy-(9E)-octadecenoate + H2O = 12-hydroxy-(9E)-octadecenoate + phosphate. The catalysed reaction is 12-(phosphooxy)octadecanoate + H2O = 12-hydroxyoctadecanoate + phosphate. It carries out the reaction 8,9-epoxy-(5Z,11Z,14Z)-eicosatrienoate + H2O = 8,9-dihydroxy-(5Z,11Z,14Z)-eicosatrienoate. It catalyses the reaction 11,12-epoxy-(5Z,8Z,14Z)-eicosatrienoate + H2O = 11,12-dihydroxy-(5Z,8Z,14Z)-eicosatrienoate. The enzyme catalyses 14,15-epoxy-(5Z,8Z,11Z)-eicosatrienoate + H2O = 14,15-dihydroxy-(5Z,8Z,11Z)-eicosatrienoate. The catalysed reaction is 9,10-epoxy-(12Z)-octadecenoate + H2O = 9,10-dihydroxy-(12Z)-octadecenoate. It carries out the reaction 8-hydroxy-(11S,12S)-epoxy-(5Z,9E,14Z)-eicosatrienoate + H2O = (8,11R,12S)-trihydroxy-(5Z,9E,14Z)-eicosatrienoate. It catalyses the reaction 10-hydroxy-(11S,12S)-epoxy- (5Z,8Z,14Z)-eicosatrienoate + H2O = (10,11S,12R)-trihydroxy-(5Z,8Z,14Z)-eicosatrienoate. The enzyme catalyses 1-tetradecanoyl-sn-glycerol 3-phosphate + H2O = 1-tetradecanoyl-sn-glycerol + phosphate. The catalysed reaction is 1-octadecanoyl-sn-glycero-3-phosphate + H2O = 1-octadecanoyl-sn-glycerol + phosphate. It carries out the reaction 1-(5Z,8Z,11Z,14Z-eicosatetraenoyl)-sn-glycero-3-phosphate + H2O = 1-(5Z,8Z,11Z,14Z-eicosatetraenoyl)-sn-glycerol + phosphate. It catalyses the reaction 1-hexadecanoyl-sn-glycero-3-phosphate + H2O = 1-hexadecanoyl-sn-glycerol + phosphate. The enzyme catalyses 1-(9Z-octadecenoyl)-sn-glycero-3-phosphate + H2O = 1-(9Z-octadecenoyl)-sn-glycerol + phosphate. The catalysed reaction is (8S,9R)-epoxy-(5Z,11Z,14Z)-eicosatrienoate + H2O = (8S,9S)-dihydroxy-(5Z,11Z,14Z)-eicosatrienoate. It carries out the reaction (11S,12R)-epoxy-(5Z,8Z,14Z)-eicosatrienoate + H2O = (11R,12R)-dihydroxy-(5Z,8Z,14Z)-eicosatrienoate. It catalyses the reaction (11S,12R)-epoxy-(5Z,8Z,14Z)-eicosatrienoate + H2O = (11S,12S)-dihydroxy-(5Z,8Z,14Z)-eicosatrienoate. The enzyme catalyses (14S,15R)-epoxy-(5Z,8Z,11Z)-eicosatrienoate + H2O = (14R,15R)-dihydroxy-(5Z,8Z,11Z)-eicosatrienoate. The catalysed reaction is (14S,15R)-epoxy-(5Z,8Z,11Z)-eicosatrienoate + H2O = (14S,15S)-dihydroxy-(5Z,8Z,11Z)-eicosatrienoate. It carries out the reaction (11R,12S)-epoxy-(5Z,8Z,14Z)-eicosatrienoate + H2O = (11S,12S)-dihydroxy-(5Z,8Z,14Z)-eicosatrienoate. It catalyses the reaction (11R,12S)-epoxy-(5Z,8Z,14Z)-eicosatrienoate + H2O = (11R,12R)-dihydroxy-(5Z,8Z,14Z)-eicosatrienoate. The enzyme catalyses (8S,9R)-epoxy-(5Z,11Z,14Z)-eicosatrienoate + H2O = (8R,9R)-dihydroxy-(5Z,11Z,14Z)-eicosatrienoate. The catalysed reaction is (14R,15S)-epoxy-(5Z,8Z,11Z)-eicosatrienoate + H2O = (14R,15R)-dihydroxy-(5Z,8Z,11Z)-eicosatrienoate. Inhibited by 1-(1-acetylpiperidin-4-yl)-3-(4-(trifl uoromethoxy)phenyl)urea (TPAU), 1-cyclohexyl-3-dodecylurea (CDU), 12-(3-adamantan-1-yl-ureido)-dodecanoic acid (AUDA), 1-((3S, 5S, 7S)-adamantan-1-yl)-3-(5-(2-(2-ethoxyethoxy) ethoxy)pentyl)urea (AEPU), N-adamantyl-N[']-cyclohexyl urea (ACU), 4-(((1S, 4S)-4-(3-((3S, 5S, 7S)-adamantan-1-yl) ureido)cyclohexyl)oxy)benzoic acid (c-AUCB), 4-(((1R, 4R)-4-(3-((3S, 5S, 7S)-adamantan-1-yl)ureido)cyclohexyl)oxy)benzoic acid (t-AUCB), 4-(((1R, 4R)-4-(3-(4(trifluoromethoxy)phenyl)ureido)cyclohexyl)oxy)benzoic acid (t-TAUCB) and to a lesser extent by 8-(3-((3S, 5S, 7S)-adamantan-1-yl)ureido) octanoic acid (AUOA). Phosphatase activity is inhibited by dodecyl-phosphate, phospholipids such as phospho-lysophosphatidic acids and fatty acids such as palmitic acid and lauric acid. Functionally, bifunctional enzyme. The C-terminal domain has epoxide hydrolase activity and acts on epoxides (alkene oxides, oxiranes) and arene oxides. Plays a role in xenobiotic metabolism by degrading potentially toxic epoxides. Also determines steady-state levels of physiological mediators. Bifunctional enzyme. The N-terminal domain has lipid phosphatase activity, with the highest activity towards threo-9,10-phosphonooxy-hydroxy-octadecanoic acid, followed by erythro-9,10-phosphonooxy-hydroxy-octadecanoic acid, 12-phosphonooxy-octadec-9Z-enoic acid and 12-phosphonooxy-octadec-9E-enoic acid. Has phosphatase activity toward lyso-glycerophospholipids with also some lower activity toward lysolipids of sphingolipid and isoprenoid phosphates. The polypeptide is Bifunctional epoxide hydrolase 2 (Homo sapiens (Human)).